Here is a 630-residue protein sequence, read N- to C-terminus: MIFPDKFDVIVIGGGHAGTEACLAAARMGCKTLLLSHNIETLGQMSCNPAIGGIGKSHLVKEIDALGGAMAKATDKGGIQFRVLNNRKGPAVRATRAQADRVLYKAAVREILENQPNLTIFQQAADDLVVEGETVRGVVTQMGVTFLAPTVVLTAGTFLGGRIHIGLENHSGGRAGDPPSIALADRLRELPLRVDRLKTGTPPRIDARSVNFDGLDEQWGDKPTPVMSFLGSQDDHPRQTCCWVTHTNERTHDIIRSGFDRSPMFTGVIEGVGPRYCPSIEDKVNRFADKNSHQIFIEPEGLTTHELYPNGISTSLPFDIQLALVRSIKGFENAHIVRPGYAIEYDFFNPQDLQYSLETKVISGLFFAGQINGTTGYEEAGAQGLLAGANAALKAQGKEPWCPERDQAYMGVLVDDLITMGTREPYRMFTSRAEYRLLLREDNADLRLTEKGRELGLVDDIRWAAFCEKREQIEQETQRMRSTWVQANSAEALQLADKLTAPLNREYSLLDLLKRPELTYADLGHLKGEAVANVQVAEQVEITAKYAGYIDRQQDEIARLRQHENTPIPASFDYDSVEGLSNELKQKLNEARPDNIARASRIPGITPAAISLLVIYLKKRGMLRKVAAES.

13–18 contributes to the FAD binding site; sequence GGGHAG. 273–287 serves as a coordination point for NAD(+); sequence GPRYCPSIEDKVNRF.

It belongs to the MnmG family. As to quaternary structure, homodimer. Heterotetramer of two MnmE and two MnmG subunits. Requires FAD as cofactor.

The protein localises to the cytoplasm. Its function is as follows. NAD-binding protein involved in the addition of a carboxymethylaminomethyl (cmnm) group at the wobble position (U34) of certain tRNAs, forming tRNA-cmnm(5)s(2)U34. This is tRNA uridine 5-carboxymethylaminomethyl modification enzyme MnmG from Teredinibacter turnerae (strain ATCC 39867 / T7901).